Here is a 218-residue protein sequence, read N- to C-terminus: Small ribosomal subunit protein uS7m (218 aa).

The N-terminal 19 residues, 1–19, are a transit peptide targeting the mitochondrion; that stretch reads MSLLGRIAEKTSRLSCLRL.

This sequence belongs to the universal ribosomal protein uS7 family. Component of the mitochondrial ribosome small subunit (28S) which comprises a 12S rRNA and about 30 distinct proteins.

It is found in the mitochondrion. This is Small ribosomal subunit protein uS7m (mRpS7) from Drosophila melanogaster (Fruit fly).